The following is a 61-amino-acid chain: Small ribosomal subunit protein uS14 (61 aa).

Zn(2+) contacts are provided by Cys-24, Cys-27, Cys-40, and Cys-43.

It belongs to the universal ribosomal protein uS14 family. Zinc-binding uS14 subfamily. As to quaternary structure, part of the 30S ribosomal subunit. Contacts proteins S3 and S10. Requires Zn(2+) as cofactor.

Functionally, binds 16S rRNA, required for the assembly of 30S particles and may also be responsible for determining the conformation of the 16S rRNA at the A site. In Borreliella afzelii (strain PKo) (Borrelia afzelii), this protein is Small ribosomal subunit protein uS14.